Reading from the N-terminus, the 270-residue chain is Phosphatidate cytidylyltransferase (270 aa).

The next 8 membrane-spanning stretches (helical) occupy residues 17–37 (FVVL…AILI), 55–75 (FFYV…FEEP), 81–101 (ILFI…SQVF), 104–124 (VAAF…FLPI), 129–149 (GAAN…FAYF), 170–190 (EGVI…RLVV), 193–213 (LLSV…TVAI), and 248–268 (IDGL…LEGV).

Belongs to the CDS family.

The protein localises to the cell membrane. The catalysed reaction is a 1,2-diacyl-sn-glycero-3-phosphate + CTP + H(+) = a CDP-1,2-diacyl-sn-glycerol + diphosphate. The protein operates within phospholipid metabolism; CDP-diacylglycerol biosynthesis; CDP-diacylglycerol from sn-glycerol 3-phosphate: step 3/3. This is Phosphatidate cytidylyltransferase (cdsA) from Thermotoga maritima (strain ATCC 43589 / DSM 3109 / JCM 10099 / NBRC 100826 / MSB8).